The following is a 343-amino-acid chain: N-acetyl-gamma-glutamyl-phosphate reductase (343 aa).

C149 is an active-site residue.

This sequence belongs to the NAGSA dehydrogenase family. Type 1 subfamily.

Its subcellular location is the cytoplasm. The catalysed reaction is N-acetyl-L-glutamate 5-semialdehyde + phosphate + NADP(+) = N-acetyl-L-glutamyl 5-phosphate + NADPH + H(+). It functions in the pathway amino-acid biosynthesis; L-arginine biosynthesis; N(2)-acetyl-L-ornithine from L-glutamate: step 3/4. Functionally, catalyzes the NADPH-dependent reduction of N-acetyl-5-glutamyl phosphate to yield N-acetyl-L-glutamate 5-semialdehyde. In Exiguobacterium sibiricum (strain DSM 17290 / CCUG 55495 / CIP 109462 / JCM 13490 / 255-15), this protein is N-acetyl-gamma-glutamyl-phosphate reductase.